The chain runs to 302 residues: MLRGTFVALITPFAGEEIDEPRLRDLVDWLIANRVDGLVPCGTTGETPSLSDTEWQRVAAVVIEQAAGRVPVIVGTGTNSTMVTIQRTRVARELGATAAMVVTPYYNKPQQDGLYRHVAAIADAVDLPLVIYNVPSRTGVNLAPETARRLLDIAPVIAFKDSSGSLDQVSELVLAVGDRSSVLSGDDSLTLPIIAVGGQGVVSVLANIAPAATATMVRAALDGDLARARQLHGELFPLARALFIETNPVPVKTAAELLGLCSATVRLPLAPLAPANRERLLAALASCPHTASLLARPMGEAA.

Residue Thr44 participates in pyruvate binding. The Proton donor/acceptor role is filled by Tyr132. Lys160 serves as the catalytic Schiff-base intermediate with substrate. Pyruvate is bound at residue Val202.

It belongs to the DapA family. As to quaternary structure, homotetramer; dimer of dimers.

It localises to the cytoplasm. The enzyme catalyses L-aspartate 4-semialdehyde + pyruvate = (2S,4S)-4-hydroxy-2,3,4,5-tetrahydrodipicolinate + H2O + H(+). Its pathway is amino-acid biosynthesis; L-lysine biosynthesis via DAP pathway; (S)-tetrahydrodipicolinate from L-aspartate: step 3/4. Functionally, catalyzes the condensation of (S)-aspartate-beta-semialdehyde [(S)-ASA] and pyruvate to 4-hydroxy-tetrahydrodipicolinate (HTPA). The protein is 4-hydroxy-tetrahydrodipicolinate synthase of Thermomicrobium roseum (strain ATCC 27502 / DSM 5159 / P-2).